A 322-amino-acid polypeptide reads, in one-letter code: Methionyl-tRNA formyltransferase (322 aa).

Residue 115-118 coordinates (6S)-5,6,7,8-tetrahydrofolate; that stretch reads SLLP.

It belongs to the Fmt family.

The catalysed reaction is L-methionyl-tRNA(fMet) + (6R)-10-formyltetrahydrofolate = N-formyl-L-methionyl-tRNA(fMet) + (6S)-5,6,7,8-tetrahydrofolate + H(+). Its function is as follows. Attaches a formyl group to the free amino group of methionyl-tRNA(fMet). The formyl group appears to play a dual role in the initiator identity of N-formylmethionyl-tRNA by promoting its recognition by IF2 and preventing the misappropriation of this tRNA by the elongation apparatus. This is Methionyl-tRNA formyltransferase from Treponema denticola (strain ATCC 35405 / DSM 14222 / CIP 103919 / JCM 8153 / KCTC 15104).